A 278-amino-acid polypeptide reads, in one-letter code: Alcohol dehydrogenase-related 31 kDa protein (278 aa).

11 to 34 (YVADCGGIALETSKVLMTKNIAKL) contacts NAD(+). Residue Ser139 coordinates substrate. Tyr152 acts as the Proton acceptor in catalysis.

This sequence belongs to the short-chain dehydrogenases/reductases (SDR) family.

The protein is Alcohol dehydrogenase-related 31 kDa protein (Adhr) of Drosophila persimilis (Fruit fly).